We begin with the raw amino-acid sequence, 347 residues long: Phenylalanine--tRNA ligase alpha subunit (347 aa).

Residue Glu-265 coordinates Mg(2+).

Belongs to the class-II aminoacyl-tRNA synthetase family. Phe-tRNA synthetase alpha subunit type 1 subfamily. As to quaternary structure, tetramer of two alpha and two beta subunits. Mg(2+) serves as cofactor.

It is found in the cytoplasm. It carries out the reaction tRNA(Phe) + L-phenylalanine + ATP = L-phenylalanyl-tRNA(Phe) + AMP + diphosphate + H(+). In Mycolicibacterium gilvum (strain PYR-GCK) (Mycobacterium gilvum (strain PYR-GCK)), this protein is Phenylalanine--tRNA ligase alpha subunit.